Consider the following 315-residue polypeptide: Voltage-dependent calcium channel gamma-3 subunit (315 aa).

4 consecutive transmembrane segments (helical) span residues 8–28, 104–124, 135–155, and 181–201; these read VQML…TIAV, SSVF…CVAA, ILSA…GIIV, and FGAF…HIYI. Residues 232–252 are disordered; that stretch reads RRRSSSRSTEPRSRDLSPISK. Position 248 is a phosphoserine (Ser248).

This sequence belongs to the PMP-22/EMP/MP20 family. CACNG subfamily. The L-type calcium channel is composed of five subunits: alpha-1, alpha-2/delta, beta and gamma. Acts as an auxiliary subunit for AMPA-selective glutamate receptors (AMPARs). Found in a complex with GRIA1, GRIA2, GRIA3, GRIA4, CNIH2, CNIH3, CACNG2, CACNG4, CACNG5, CACNG7 and CACNG8. Interacts with AP4M1 and GRIA1; associates GRIA1 with the adaptor protein complex 4 (AP-4) to target GRIA1 to the somatodendritic compartment of neurons.

It localises to the membrane. Functionally, regulates the trafficking and gating properties of AMPA-selective glutamate receptors (AMPARs). Promotes their targeting to the cell membrane and synapses and modulates their gating properties by slowing their rates of activation, deactivation and desensitization. Does not show subunit-specific AMPA receptor regulation and regulates all AMPAR subunits. Thought to stabilize the calcium channel in an inactivated (closed) state. This is Voltage-dependent calcium channel gamma-3 subunit (CACNG3) from Bos taurus (Bovine).